The chain runs to 352 residues: Probable gamma-glutamyl hydrolase 3 (352 aa).

The N-terminal stretch at 1–19 (MWRFCFFLSLLFFDVSAVK) is a signal peptide. The Gamma-glutamyl hydrolase domain occupies 49-352 (AADPNLNYKP…SGDDEVYIFT (304 aa)). Cys166 (nucleophile) is an active-site residue. His279 is a catalytic residue.

The protein belongs to the peptidase C26 family.

It is found in the vacuole. Its subcellular location is the secreted. The protein localises to the extracellular space. The protein resides in the cell wall. It catalyses the reaction (6S)-5,6,7,8-tetrahydrofolyl-(gamma-L-Glu)(n) + (n-1) H2O = (6S)-5,6,7,8-tetrahydrofolate + (n-1) L-glutamate. Its function is as follows. Cleaves the polyglutamate sidechains of folate polyglutamates in the vacuole. Is important for polyglutamyl tail length determination before vacuolar exit. Plays a role on folate stability and intracellular folate content. The protein is Probable gamma-glutamyl hydrolase 3 (GGH3) of Arabidopsis thaliana (Mouse-ear cress).